Reading from the N-terminus, the 155-residue chain is Rusticyanin (155 aa).

A Plastocyanin-like domain is found at 53–155 (SFEVHDKKNP…TGMFGKIIVK (103 aa)). Cu cation-binding residues include His85, Cys138, His143, and Met148.

In terms of assembly, monomer. Cu cation serves as cofactor.

The protein localises to the periplasm. In terms of biological role, electron carrier from cytochrome c552 to the A-type oxidase. The polypeptide is Rusticyanin (rus) (Acidithiobacillus ferrooxidans (Thiobacillus ferrooxidans)).